Consider the following 1071-residue polypeptide: Serine/threonine-protein phosphatase 6 regulatory ankyrin repeat subunit C (1071 aa).

28 ANK repeats span residues 7-36 (SDQP…EVNA), 40-69 (ERRT…NVNA), 73-102 (VWLT…DVTA), 106-135 (YWQT…SLNM), 139-168 (TGRA…NLSA), 172-201 (KDRQ…DKSC), 205-234 (RGYT…EIDE), 238-267 (FGNT…NVNQ), 271-301 (RGYT…DVNM), 305-334 (EGKS…EIDC), 338-367 (YGNT…DTAR), 371-400 (HGMF…LYSI), 422-451 (FGRT…DMNK), 455-484 (FGRT…EVNE), 488-539 (SGCT…DPCL), 543-573 (KGYS…TLGD), 578-607 (GSIS…CVDV), 611-640 (VGRS…SCLL), 645-674 (SKWG…GADL), 681-710 (EGQT…CPDM), 714-743 (RGRT…SVLS), 747-776 (QGRS…HSQP), 784-814 (HGYT…SIQE), 816-845 (NPFT…CNSL), 852-881 (KGRT…DIDA), 885-915 (SGRS…DLSL), 919-951 (NKNT…LINA), and 955-984 (MLQM…TVLA).

In terms of assembly, protein phosphatase 6 (PP6) holoenzyme is proposed to be a heterotrimeric complex formed by the catalytic subunit, a SAPS domain-containing subunit (PP6R) and an ankyrin repeat-domain containing regulatory subunit (ARS).

Functionally, putative regulatory subunit of protein phosphatase 6 (PP6) that may be involved in the recognition of phosphoprotein substrates. This is Serine/threonine-protein phosphatase 6 regulatory ankyrin repeat subunit C (ankrd52) from Danio rerio (Zebrafish).